Consider the following 424-residue polypeptide: Histidine--tRNA ligase (424 aa).

The protein belongs to the class-II aminoacyl-tRNA synthetase family. Homodimer.

It is found in the cytoplasm. It catalyses the reaction tRNA(His) + L-histidine + ATP = L-histidyl-tRNA(His) + AMP + diphosphate + H(+). The chain is Histidine--tRNA ligase from Shewanella denitrificans (strain OS217 / ATCC BAA-1090 / DSM 15013).